A 246-amino-acid chain; its full sequence is 5'-nucleotidase SurE (246 aa).

A divalent metal cation-binding residues include aspartate 8, aspartate 9, serine 39, and asparagine 91.

The protein belongs to the SurE nucleotidase family. A divalent metal cation is required as a cofactor.

It localises to the cytoplasm. It carries out the reaction a ribonucleoside 5'-phosphate + H2O = a ribonucleoside + phosphate. Nucleotidase that shows phosphatase activity on nucleoside 5'-monophosphates. This chain is 5'-nucleotidase SurE, found in Dechloromonas aromatica (strain RCB).